The following is a 296-amino-acid chain: Nucleotide-binding protein RSc0403 (296 aa).

ATP is bound at residue 8 to 15; sequence GMSGSGKS. Residue 57-60 participates in GTP binding; sequence DIRS. The segment at 99–124 is disordered; sequence TRRRHPLSIRNGRPDAGNPPSAAKGP.

Belongs to the RapZ-like family.

Displays ATPase and GTPase activities. The chain is Nucleotide-binding protein RSc0403 from Ralstonia nicotianae (strain ATCC BAA-1114 / GMI1000) (Ralstonia solanacearum).